A 382-amino-acid polypeptide reads, in one-letter code: RNA binding protein fox-1 homolog 1 (382 aa).

The tract at residues 1–121 (MNCEREQLRG…NKSQPKRLHV (121 aa)) is disordered. Residues 70 to 87 (QTHSEQSPADTSAQTVSG) are compositionally biased toward polar residues. Low complexity predominate over residues 88-99 (TATQTDDAAPTD). Positions 100 to 113 (GQPQTQPSENTENK) are enriched in polar residues. The region spanning 117 to 193 (KRLHVSNIPF…RKIEVNNATA (77 aa)) is the RRM domain. At Arg-317 the chain carries Asymmetric dimethylarginine. Residues 357 to 382 (MPQGSSPSTDFRGAKLHTSRPLLSGS) are disordered.

In terms of assembly, binds to the C-terminus of ATXN2.

Its subcellular location is the nucleus. It is found in the cytoplasm. Functionally, RNA-binding protein that regulates alternative splicing events by binding to 5'-UGCAUGU-3' elements. Prevents binding of U2AF2 to the 3'-splice site. Regulates alternative splicing of tissue-specific exons and of differentially spliced exons during erythropoiesis. This is RNA binding protein fox-1 homolog 1 (RBFOX1) from Pongo abelii (Sumatran orangutan).